Reading from the N-terminus, the 216-residue chain is Octanoyltransferase (216 aa).

In terms of domain architecture, BPL/LPL catalytic spans 34 to 209 (ENTIDEIWLV…KMNQQLDYSH (176 aa)). Residues 73-80 (RGGQITFH), 140-142 (SLG), and 153-155 (GLA) each bind substrate. Cysteine 171 functions as the Acyl-thioester intermediate in the catalytic mechanism.

The protein belongs to the LipB family.

It is found in the cytoplasm. The catalysed reaction is octanoyl-[ACP] + L-lysyl-[protein] = N(6)-octanoyl-L-lysyl-[protein] + holo-[ACP] + H(+). It functions in the pathway protein modification; protein lipoylation via endogenous pathway; protein N(6)-(lipoyl)lysine from octanoyl-[acyl-carrier-protein]: step 1/2. Catalyzes the transfer of endogenously produced octanoic acid from octanoyl-acyl-carrier-protein onto the lipoyl domains of lipoate-dependent enzymes. Lipoyl-ACP can also act as a substrate although octanoyl-ACP is likely to be the physiological substrate. The polypeptide is Octanoyltransferase (Psychromonas ingrahamii (strain DSM 17664 / CCUG 51855 / 37)).